A 343-amino-acid chain; its full sequence is MTMRLPPLPTIGELIRLFGLSAKQQLSQNFLLDLNITDKIVRSSGDLTNKTVIEVGPGPGGLTRSILKAGAKKLVVIEKDRRFLPALEVLRHAAGNIDGSPWEEAFLTKSEMDAKRYMSYAPNKSRMQIVMNDVLRVDEQEILQHIHAPIDSNDKTQWENMAPITIIGNLPFAISTELTIKWLKQIQGRHGAFRFGRAEFILMFQKEVADRLIANPGTKQYSRLTVMTQQLCSVKKLSDIPGSAFVPKPDVDASLVSMVPRVTPLGVNVPTPTLEYVCRQVFGQRRKMINNSVKTLGPEAEILLARAHIDPTLRPEQLTVPQWCDLARAYQQWENKPQWAPAL.

Residues 28–31 (QNFL), N29, L31, G56, E78, D133, and N169 each bind S-adenosyl-L-methionine.

This sequence belongs to the class I-like SAM-binding methyltransferase superfamily. rRNA adenine N(6)-methyltransferase family. KsgA subfamily.

It is found in the mitochondrion. Its function is as follows. Probable S-adenosyl-L-methionine-dependent methyltransferase which specifically dimethylates mitochondrial 12S rRNA at the conserved stem loop. Also required for basal transcription of mitochondrial DNA. Stimulates transcription independently of the methyltransferase activity. This chain is Dimethyladenosine transferase 1, mitochondrial, found in Vermamoeba vermiformis (Amoeba).